Consider the following 406-residue polypeptide: Cysteine desulfurase (406 aa).

At K226 the chain carries N6-(pyridoxal phosphate)lysine. Residue C364 is the Cysteine persulfide intermediate of the active site.

This sequence belongs to the class-V pyridoxal-phosphate-dependent aminotransferase family. Csd subfamily. As to quaternary structure, homodimer. Interacts with SufE and the SufBCD complex composed of SufB, SufC and SufD. The interaction with SufE is required to mediate the direct transfer of the sulfur atom from the S-sulfanylcysteine. The cofactor is pyridoxal 5'-phosphate.

It is found in the cytoplasm. The enzyme catalyses (sulfur carrier)-H + L-cysteine = (sulfur carrier)-SH + L-alanine. The catalysed reaction is L-selenocysteine + AH2 = hydrogenselenide + L-alanine + A + H(+). It functions in the pathway cofactor biosynthesis; iron-sulfur cluster biosynthesis. Cysteine desulfurases mobilize the sulfur from L-cysteine to yield L-alanine, an essential step in sulfur metabolism for biosynthesis of a variety of sulfur-containing biomolecules. Component of the suf operon, which is activated and required under specific conditions such as oxidative stress and iron limitation. Acts as a potent selenocysteine lyase in vitro, that mobilizes selenium from L-selenocysteine. Selenocysteine lyase activity is however unsure in vivo. The chain is Cysteine desulfurase from Yersinia pseudotuberculosis serotype O:1b (strain IP 31758).